A 343-amino-acid chain; its full sequence is MSENEGWCTIESDPGVFTELITKIGVKDIQVEELYTLDSSEYDRLKPVLGLIFLFKWEKEEENRTISDNENIFFANQVIQNACATQAILSVLLNSEGIELGEELSNFKSFVGDFPPMMKGEAIGNSELIKETHNSFTVQDPFIFSKKKNRKPSDAFHFISFIPFQGKVYELDGLKKGPYCLGDCTPDNWLEIATPFIQKRMEKYSQGEIRFNLMAVIKNRQTTLQEKILTLEKKKNDLEIKLSELNSGSGGDNKEESGGATPTTKEDLNFMINVVNNDIEEANNEILMEQEKFRNWKDENIRRKHNFTPLILNLIKGLAEKDNLQPLIQKAKDQISQKQQQHK.

The UCH catalytic domain occupies 6-218; sequence GWCTIESDPG…IRFNLMAVIK (213 aa). The active-site Nucleophile is the Cys-83. The active-site Proton donor is His-157. The segment at 242-266 is disordered; that stretch reads LSELNSGSGGDNKEESGGATPTTKE. In terms of domain architecture, ULD spans 306–334; that stretch reads NFTPLILNLIKGLAEKDNLQPLIQKAKDQ.

It belongs to the peptidase C12 family. In terms of assembly, component of the 19S (PA700) regulatory complex of the 26S proteasome.

The protein resides in the cytoplasm. Its subcellular location is the nucleus. It catalyses the reaction Thiol-dependent hydrolysis of ester, thioester, amide, peptide and isopeptide bonds formed by the C-terminal Gly of ubiquitin (a 76-residue protein attached to proteins as an intracellular targeting signal).. Its function is as follows. Protease that specifically cleaves 'Lys-48'-linked polyubiquitin chains. Deubiquitinating enzyme associated with the 19S regulatory subunit of the 26S proteasome. This Dictyostelium discoideum (Social amoeba) protein is Ubiquitin carboxyl-terminal hydrolase isozyme L5 (uch2).